The primary structure comprises 622 residues: Probable potassium transport system protein Kup (622 aa).

12 helical membrane-spanning segments follow: residues 9–29, 52–72, 101–121, 137–157, 169–189, 213–233, 247–267, 287–309, 337–357, 363–383, 396–416, and 419–439; these read LPAV…TSPL, FLSL…LAFV, VLLV…VITP, PALT…LFVI, FGPV…ISIF, VAFF…ALYA, WFTV…ALIL, FPMV…SGVF, IYIP…VVTF, LAAA…ILAC, VVKI…LANV, and FFAG…VMAT.

This sequence belongs to the HAK/KUP transporter (TC 2.A.72) family.

It localises to the cell inner membrane. The catalysed reaction is K(+)(in) + H(+)(in) = K(+)(out) + H(+)(out). In terms of biological role, transport of potassium into the cell. Likely operates as a K(+):H(+) symporter. The polypeptide is Probable potassium transport system protein Kup (Tolumonas auensis (strain DSM 9187 / NBRC 110442 / TA 4)).